Reading from the N-terminus, the 304-residue chain is NAD kinase (304 aa).

D77 acts as the Proton acceptor in catalysis. NAD(+) is bound by residues 77 to 78 (DG), R82, 151 to 152 (NE), R162, D181, and 192 to 197 (TAYSFS).

The protein belongs to the NAD kinase family. A divalent metal cation is required as a cofactor.

It localises to the cytoplasm. The catalysed reaction is NAD(+) + ATP = ADP + NADP(+) + H(+). In terms of biological role, involved in the regulation of the intracellular balance of NAD and NADP, and is a key enzyme in the biosynthesis of NADP. Catalyzes specifically the phosphorylation on 2'-hydroxyl of the adenosine moiety of NAD to yield NADP. This chain is NAD kinase, found in Leifsonia xyli subsp. xyli (strain CTCB07).